A 121-amino-acid polypeptide reads, in one-letter code: Large ribosomal subunit protein uL18 (121 aa).

Basic residues predominate over residues 1 to 19; sequence MASKKVQKIRDKRKARVRA. The disordered stretch occupies residues 1–23; that stretch reads MASKKVQKIRDKRKARVRAKISG.

Belongs to the universal ribosomal protein uL18 family. Part of the 50S ribosomal subunit; part of the 5S rRNA/L5/L18/L25 subcomplex. Contacts the 5S and 23S rRNAs.

Its function is as follows. This is one of the proteins that bind and probably mediate the attachment of the 5S RNA into the large ribosomal subunit, where it forms part of the central protuberance. The sequence is that of Large ribosomal subunit protein uL18 from Syntrophus aciditrophicus (strain SB).